The chain runs to 100 residues: MKLTPREKDKLLIFTAALLAERRRARGLKLNYPEAIAFITAALMEAARDGKTVAEVMHYGTTLLTRNDVMEGVPEMIPDIQVEATFPDGTKLVTVHHPIP.

This sequence belongs to the urease gamma subunit family. In terms of assembly, heterotrimer of UreA (gamma), UreB (beta) and UreC (alpha) subunits. Three heterotrimers associate to form the active enzyme.

Its subcellular location is the cytoplasm. It catalyses the reaction urea + 2 H2O + H(+) = hydrogencarbonate + 2 NH4(+). It functions in the pathway nitrogen metabolism; urea degradation; CO(2) and NH(3) from urea (urease route): step 1/1. In Paraburkholderia phytofirmans (strain DSM 17436 / LMG 22146 / PsJN) (Burkholderia phytofirmans), this protein is Urease subunit gamma.